Here is a 309-residue protein sequence, read N- to C-terminus: Ribosomal RNA large subunit methyltransferase F (309 aa).

The disordered stretch occupies residues 1 to 21 (MASQHDKKSVQSGLLHPRNPH).

The protein belongs to the methyltransferase superfamily. METTL16/RlmF family.

The protein localises to the cytoplasm. It carries out the reaction adenosine(1618) in 23S rRNA + S-adenosyl-L-methionine = N(6)-methyladenosine(1618) in 23S rRNA + S-adenosyl-L-homocysteine + H(+). Functionally, specifically methylates the adenine in position 1618 of 23S rRNA. This is Ribosomal RNA large subunit methyltransferase F from Desulfotalea psychrophila (strain LSv54 / DSM 12343).